Consider the following 369-residue polypeptide: Peptide chain release factor 2 (369 aa).

Gln-249 bears the N5-methylglutamine mark.

This sequence belongs to the prokaryotic/mitochondrial release factor family. Post-translationally, methylated by PrmC. Methylation increases the termination efficiency of RF2.

Its subcellular location is the cytoplasm. Peptide chain release factor 2 directs the termination of translation in response to the peptide chain termination codons UGA and UAA. The protein is Peptide chain release factor 2 of Thermosipho africanus (strain TCF52B).